Here is a 231-residue protein sequence, read N- to C-terminus: 3-oxoadipate CoA-transferase subunit A (231 aa).

25 to 31 (GGFGTAG) is a binding site for CoA.

It belongs to the 3-oxoacid CoA-transferase subunit A family. In terms of assembly, heterodimer.

The catalysed reaction is 3-oxoadipate + succinyl-CoA = 3-oxoadipyl-CoA + succinate. It functions in the pathway aromatic compound metabolism; beta-ketoadipate pathway; acetyl-CoA and succinyl-CoA from 3-oxoadipate: step 1/2. The protein is 3-oxoadipate CoA-transferase subunit A (pcaI) of Pseudomonas putida (Arthrobacter siderocapsulatus).